Consider the following 70-residue polypeptide: Deleted in esophageal cancer 1 (70 aa).

As to expression, expressed in many tissues, with highest expression in prostate and testis. Reduced expression in esophageal carcinomas.

Functionally, candidate tumor suppressor. The sequence is that of Deleted in esophageal cancer 1 from Homo sapiens (Human).